Consider the following 472-residue polypeptide: Glutamate--tRNA ligase 1 (472 aa).

The short motif at 9 to 19 (PSPTGLLHVGN) is the 'HIGH' region element. Residues 112–131 (AMAEKRPPRYDGTWRDRDPS) are compositionally biased toward basic and acidic residues. The tract at residues 112-133 (AMAEKRPPRYDGTWRDRDPSEA) is disordered. Positions 238-242 (KLSKR) match the 'KMSKS' region motif. Lys-241 is an ATP binding site.

This sequence belongs to the class-I aminoacyl-tRNA synthetase family. Glutamate--tRNA ligase type 1 subfamily. In terms of assembly, monomer.

It localises to the cytoplasm. The enzyme catalyses tRNA(Glu) + L-glutamate + ATP = L-glutamyl-tRNA(Glu) + AMP + diphosphate. Functionally, catalyzes the attachment of glutamate to tRNA(Glu) in a two-step reaction: glutamate is first activated by ATP to form Glu-AMP and then transferred to the acceptor end of tRNA(Glu). This Gluconobacter oxydans (strain 621H) (Gluconobacter suboxydans) protein is Glutamate--tRNA ligase 1.